A 357-amino-acid polypeptide reads, in one-letter code: uncharacterized protein (357 aa).

This is an uncharacterized protein from Mycoplasma pneumoniae (strain ATCC 29342 / M129 / Subtype 1) (Mycoplasmoides pneumoniae).